The following is a 201-amino-acid chain: LexA repressor (201 aa).

The H-T-H motif DNA-binding region spans Leu28–Glu48. Residues Ser120 and Lys157 each act as for autocatalytic cleavage activity in the active site.

Belongs to the peptidase S24 family. Homodimer.

The enzyme catalyses Hydrolysis of Ala-|-Gly bond in repressor LexA.. Functionally, represses a number of genes involved in the response to DNA damage (SOS response), including recA and lexA. In the presence of single-stranded DNA, RecA interacts with LexA causing an autocatalytic cleavage which disrupts the DNA-binding part of LexA, leading to derepression of the SOS regulon and eventually DNA repair. This Geobacter sp. (strain M21) protein is LexA repressor.